Here is a 356-residue protein sequence, read N- to C-terminus: Tetraacyldisaccharide 4'-kinase (356 aa).

Residue 67-74 (FVGGTGKT) participates in ATP binding.

It belongs to the LpxK family.

It catalyses the reaction a lipid A disaccharide + ATP = a lipid IVA + ADP + H(+). It participates in glycolipid biosynthesis; lipid IV(A) biosynthesis; lipid IV(A) from (3R)-3-hydroxytetradecanoyl-[acyl-carrier-protein] and UDP-N-acetyl-alpha-D-glucosamine: step 6/6. In terms of biological role, transfers the gamma-phosphate of ATP to the 4'-position of a tetraacyldisaccharide 1-phosphate intermediate (termed DS-1-P) to form tetraacyldisaccharide 1,4'-bis-phosphate (lipid IVA). The chain is Tetraacyldisaccharide 4'-kinase from Herminiimonas arsenicoxydans.